Consider the following 463-residue polypeptide: Quinolone resistance protein NorB (463 aa).

14 helical membrane passes run 17–37 (IGIV…VNVV), 53–73 (IAVS…GGLA), 86–106 (IILN…LLLI), 107–127 (IGRL…LSII), 142–162 (YWSI…GAVA), 165–185 (LGWR…LFLI), 201–221 (FDIK…ILIT), 230–250 (SLLF…FIVL), 273–293 (TASN…NTFV), 299–319 (YSSL…LIMI), 334–354 (PMLI…LTFL), 357–377 (ILYV…LGIY), 403–423 (MASA…YAIV), and 435–455 (IALW…LLLV).

The protein belongs to the major facilitator superfamily. TCR/Tet family.

It localises to the cell membrane. Multidrug efflux pump that acts independently of NorA and is one of the factors that confers resistance against diverse quinolones and chemical compounds. In Staphylococcus aureus (strain MSSA476), this protein is Quinolone resistance protein NorB (norB).